The chain runs to 1210 residues: ATPase family AAA domain-containing protein At1g05910 (1210 aa).

Residues 1 to 11 show a composition bias toward polar residues; it reads MHPKRSSQGDG. Disordered stretches follow at residues 1–32 and 63–291; these read MHPK…LHGR and LHKG…RTDD. Positions 97 to 109 are enriched in acidic residues; it reads DYTDSSGAEDEDM. Residues 130–146 show a composition bias toward basic and acidic residues; that stretch reads SRKDMDAELAPRREGLR. The span at 167–226 shows a compositional bias: acidic residues; the sequence is DTSEEKDGQDETENGNELDDADDGENEVEAEDEGNGEDEGDGEDEGEEDGDDDEEGDEEQ. The span at 227–244 shows a compositional bias: basic and acidic residues; the sequence is EGRKRYDLRNRAEVRRMP. The segment covering 276–286 has biased composition (basic residues); the sequence is GGSRPHKRHRF. 422–429 serves as a coordination point for ATP; it reads GPPGTGKT. The tract at residues 856 to 883 is disordered; sequence LNGKPDGPQPLPELPKVPKEPTGPKPAE. In terms of domain architecture, Bromo spans 897–1000; that stretch reads RLRMCLRDVC…DVVHGMLSQM (104 aa). Residues 1057 to 1070 are compositionally biased toward basic and acidic residues; it reads DRDYEGLKKPKKTT. Residues 1057 to 1151 form a disordered region; sequence DRDYEGLKKP…EISSRTESVK (95 aa). The segment covering 1080 to 1090 has biased composition (polar residues); the sequence is DKSQNQDSGQE. 2 stretches are compositionally biased toward basic and acidic residues: residues 1108–1123 and 1138–1151; these read DGDR…KEAS and KSDK…ESVK.

It belongs to the AAA ATPase family.

The polypeptide is ATPase family AAA domain-containing protein At1g05910 (Arabidopsis thaliana (Mouse-ear cress)).